We begin with the raw amino-acid sequence, 504 residues long: MAGGALTDEGGLKRAHLYEHRITSYFIFACIVGSMGGSLFGYDLGVSGGVTSMDDFLKEFFPGIYKRKQMHLNETDYCKYDNQILTLFTSSLYFAGLISTFGASYVTRIYGRRGSILVGSVSFFLGGVINAAAKNILMLILGRIFLGIGIGFGNQAVPLYLSEMAPAKIRGTVNQLFQLTTCIGILVANLINYKTEQIHPWGWRLSLGLATVPAILMFLGGLVLPETPNSLVEQGKLEKAKAVLIKVRGTNNIEAEFQDLVEASDAARAVKNPFRNLLARRNRPQLVIGAIGLPAFQQLTGMNSILFYAPVMFQSLGFGGSASLISSTITNAALVVAAIMSMYSADKFGRRFLLLEASVEMFCYMVVVGVTLALKFGEGKELPKSLGLILVVLICLFVLAYGRSWGPMGWLVPSELFPLETRSAGQSVVVCVNLFFTALIAQCFLVSLCHLKYGIFLLFAGLILGMGSFVYFLLPETKQVPIEEVYLLWRQHWLWKKYVEDVDE.

The Cytoplasmic portion of the chain corresponds to 1–25; it reads MAGGALTDEGGLKRAHLYEHRITSY. The next 12 helical transmembrane spans lie at 26-46, 84-104, 121-141, 144-164, 171-191, 205-225, 286-308, 315-337, 352-372, 382-402, 428-448, and 454-474; these read FIFA…DLGV, ILTL…FGAS, VSFF…MLIL, IFLG…LSEM, GTVN…ANLI, LSLG…LVLP, LVIG…ILFY, SLGF…LVVA, FLLL…GVTL, LPKS…LAYG, VVVC…LVSL, and GIFL…YFLL. The Cytoplasmic segment spans residues 475–504; it reads PETKQVPIEEVYLLWRQHWLWKKYVEDVDE.

Belongs to the major facilitator superfamily. Sugar transporter (TC 2.A.1.1) family.

Its subcellular location is the membrane. Its function is as follows. Mediates an active uptake of hexoses, probably by sugar/hydrogen symport. The sequence is that of Sugar transport protein 14 (STP14) from Arabidopsis thaliana (Mouse-ear cress).